Consider the following 156-residue polypeptide: Tripartite terminase subunit 2 (156 aa).

The segment at 1–37 (MYESENASEHHPELEDVFSENTGDSNPSMGSSDSTRS) is disordered. The span at 19–37 (SENTGDSNPSMGSSDSTRS) shows a compositional bias: polar residues.

It belongs to the herpesviridae TRM2 protein family. In terms of assembly, associates with TRM1 and TRM3 to form the tripartite terminase complex.

The protein localises to the host nucleus. Component of the molecular motor that translocates viral genomic DNA in empty capsid during DNA packaging. Forms a tripartite terminase complex together with TRM1 and TRM3 in the host cytoplasm. Once the complex reaches the host nucleus, it interacts with the capsid portal vertex. This portal forms a ring in which genomic DNA is translocated into the capsid. The polypeptide is Tripartite terminase subunit 2 (Varicella-zoster virus (strain Dumas) (HHV-3)).